The following is a 484-amino-acid chain: Sperm motility kinase 2B (484 aa).

The Protein kinase domain occupies 8–256 (YVMLETIGHG…VAEVMVHPWV (249 aa)). ATP-binding positions include 14–22 (IGHGGCSKV) and Lys37. The active-site Proton acceptor is the Asp127. Residues 272–314 (PLKPNPAIVKAMGYIGFQAQDIEDSLRQRKFNETMASYCLLKK) form the UBA domain. Polar residues-rich tracts occupy residues 356–373 (PTSL…CGRS) and 422–434 (SSDD…TSAS). 2 disordered regions span residues 356–400 (PTSL…TMDH) and 422–450 (SSDD…RGIK).

It belongs to the protein kinase superfamily. CAMK Ser/Thr protein kinase family. Smok subfamily. In terms of tissue distribution, testis-specific. Expressed in the testis from 22 days postpartum (22 dpp).

It catalyses the reaction L-seryl-[protein] + ATP = O-phospho-L-seryl-[protein] + ADP + H(+). The enzyme catalyses L-threonyl-[protein] + ATP = O-phospho-L-threonyl-[protein] + ADP + H(+). May play a role in sperm motility, especially in the regulation of flagellar function. The chain is Sperm motility kinase 2B from Mus musculus (Mouse).